We begin with the raw amino-acid sequence, 659 residues long: Exoribonuclease 2 (659 aa).

Positions 189-532 constitute an RNB domain; that stretch reads REDLTHLYFT…HRLIKQVLSN (344 aa). Residues 576-658 form the S1 motif domain; that stretch reads NVEFDGEIQD…ETRSVVGDVL (83 aa).

It belongs to the RNR ribonuclease family. RNase II subfamily.

The protein resides in the cytoplasm. The catalysed reaction is Exonucleolytic cleavage in the 3'- to 5'-direction to yield nucleoside 5'-phosphates.. In terms of biological role, involved in mRNA degradation. Hydrolyzes single-stranded polyribonucleotides processively in the 3' to 5' direction. This Glaesserella parasuis serovar 5 (strain SH0165) (Haemophilus parasuis) protein is Exoribonuclease 2.